Here is a 208-residue protein sequence, read N- to C-terminus: Protein-L-isoaspartate O-methyltransferase (208 aa).

The active site involves Ser-59.

This sequence belongs to the methyltransferase superfamily. L-isoaspartyl/D-aspartyl protein methyltransferase family.

The protein localises to the cytoplasm. It catalyses the reaction [protein]-L-isoaspartate + S-adenosyl-L-methionine = [protein]-L-isoaspartate alpha-methyl ester + S-adenosyl-L-homocysteine. In terms of biological role, catalyzes the methyl esterification of L-isoaspartyl residues in peptides and proteins that result from spontaneous decomposition of normal L-aspartyl and L-asparaginyl residues. It plays a role in the repair and/or degradation of damaged proteins. This is Protein-L-isoaspartate O-methyltransferase from Klebsiella pneumoniae subsp. pneumoniae (strain ATCC 700721 / MGH 78578).